We begin with the raw amino-acid sequence, 594 residues long: MGVGGTSASDTALSLCPTAPEWPPRNGSSGRAWGGPLQSGAPINSTDPLGPQLEPPGGGPATADPTVGCMGCSGEGAASSVPPVPDAAQDPRLGVTGPTDGDGGVVALGSPEEVGSGEQPTRAGVGPTEGLTPRPPGLPSPGLGLSSPGPNLGLPSLDLPNPNLGLPDPNLGLPNPSLGLPSPGPTPDRPIPNPNPSLDLPDPGLAIQTPNLGLSNPNIPLPSPSPGPGTEPDLLPVAEDSEVSMELPQPSSSPAPAQRARGRTDRTWLGAPEPISAAPGTAEPPEIIDVDYYDVFDGGHGPGGGHGAGGAAQREPGGAATPWGLHELYDDFTPFDEADFYPTTSFYAEGDDDAEEELEEDEEEEEEEDGGLEDENGYRPPASAAPRVPPPPSPTEGTPMARPRPGERAVPENSSECRSGYVRHNSSCRSVCDLVPSYCHNGGQCYLVESHGAFCRCNTQDYTWHKGTRCEAIVTDFQVLCVAVGSAALVLLLLFMLTVFFAKKLYLLKTENSKLRKTKYRTPSELHNDNFSLSTIAEGSHPNDDPGAPHKLQDPLKPGLKDEEPLSILSTAPEEGSKGEPGGCGVPCLHNNLG.

Polar residues predominate over residues 1–12 (MGVGGTSASDTA). A signal peptide spans 1-18 (MGVGGTSASDTALSLCPT). Disordered stretches follow at residues 1–325 (MGVG…PWGL) and 343–418 (TTSF…SECR). At 19–481 (APEWPPRNGS…AIVTDFQVLC (463 aa)) the chain is on the extracellular side. N-linked (GlcNAc...) asparagine glycans are attached at residues Asn-26 and Asn-44. A compositionally biased stretch (low complexity) spans 140 to 181 (SPGLGLSSPGPNLGLPSLDLPNPNLGLPDPNLGLPNPSLGLP). Composition is skewed to pro residues over residues 182–195 (SPGP…PNPN) and 219–229 (IPLPSPSPGPG). The span at 248 to 259 (PQPSSSPAPAQR) shows a compositional bias: low complexity. The segment covering 298–310 (GGHGPGGGHGAGG) has biased composition (gly residues). The interval 338 to 377 (ADFYPTTSFYAEGDDDAEEELEEDEEEEEEEDGGLEDENG) is interaction with TNC and TNR. Positions 349 to 375 (EGDDDAEEELEEDEEEEEEEDGGLEDE) are enriched in acidic residues. 2 N-linked (GlcNAc...) asparagine glycosylation sites follow: Asn-413 and Asn-425. The EGF-like domain maps to 429 to 471 (RSVCDLVPSYCHNGGQCYLVESHGAFCRCNTQDYTWHKGTRCE). 3 disulfides stabilise this stretch: Cys-432–Cys-445, Cys-439–Cys-455, and Cys-457–Cys-470. A helical transmembrane segment spans residues 482–502 (VAVGSAALVLLLLFMLTVFFA). Topologically, residues 503–594 (KKLYLLKTEN…GVPCLHNNLG (92 aa)) are cytoplasmic. The tract at residues 535 to 594 (TIAEGSHPNDDPGAPHKLQDPLKPGLKDEEPLSILSTAPEEGSKGEPGGCGVPCLHNNLG) is disordered. Residues 541–564 (HPNDDPGAPHKLQDPLKPGLKDEE) show a composition bias toward basic and acidic residues.

Binds TNC and TNR. The 80 kDa form but not the 140 kDa form can bind TNC and TNR when expressed at the cell surface. Post-translationally, different forms exist: the 140 kDa form (also reported as 130 kDa), which probably consists of the entire protein, and the 38 and 80 kDa forms, which are probably cleaved in their N-terminus. Increase in synaptic activity, results in shedding of the extracellular domain and expression at the cell surface of a 38 kDa form. A form of 200 kDa has also been reported, which is probably hyperglycosylated. In terms of processing, N-glycosylated. O-glycosylated; contains chondroitin sulfate glycans. Part-time proteoglycan, the 200 kDa form is the only one containing chondroitin sulfate glycans. Expressed in astroglial and neuronal surfaces in different parts of the embryonic brain. Expressed in adult brain and retina (at protein level).

It is found in the cell membrane. In terms of biological role, may function as a growth and differentiation factor involved in neuritogenesis and more particularly in neurite extension. The chain is Chondroitin sulfate proteoglycan 5 (CSPG5) from Gallus gallus (Chicken).